The following is a 472-amino-acid chain: 3-isopropylmalate dehydratase large subunit (472 aa).

The [4Fe-4S] cluster site is built by C347, C407, and C410.

Belongs to the aconitase/IPM isomerase family. LeuC type 1 subfamily. As to quaternary structure, heterodimer of LeuC and LeuD. It depends on [4Fe-4S] cluster as a cofactor.

The enzyme catalyses (2R,3S)-3-isopropylmalate = (2S)-2-isopropylmalate. Its pathway is amino-acid biosynthesis; L-leucine biosynthesis; L-leucine from 3-methyl-2-oxobutanoate: step 2/4. In terms of biological role, catalyzes the isomerization between 2-isopropylmalate and 3-isopropylmalate, via the formation of 2-isopropylmaleate. The chain is 3-isopropylmalate dehydratase large subunit from Parasynechococcus marenigrum (strain WH8102).